The sequence spans 156 residues: 6,7-dimethyl-8-ribityllumazine synthase (156 aa).

Residues Phe-23, 57 to 59 (AFE), and 81 to 83 (AVI) each bind 5-amino-6-(D-ribitylamino)uracil. 86–87 (AT) contributes to the (2S)-2-hydroxy-3-oxobutyl phosphate binding site. His-89 (proton donor) is an active-site residue. 5-amino-6-(D-ribitylamino)uracil is bound at residue Phe-114. Arg-128 provides a ligand contact to (2S)-2-hydroxy-3-oxobutyl phosphate.

It belongs to the DMRL synthase family.

It carries out the reaction (2S)-2-hydroxy-3-oxobutyl phosphate + 5-amino-6-(D-ribitylamino)uracil = 6,7-dimethyl-8-(1-D-ribityl)lumazine + phosphate + 2 H2O + H(+). It functions in the pathway cofactor biosynthesis; riboflavin biosynthesis; riboflavin from 2-hydroxy-3-oxobutyl phosphate and 5-amino-6-(D-ribitylamino)uracil: step 1/2. Its function is as follows. Catalyzes the formation of 6,7-dimethyl-8-ribityllumazine by condensation of 5-amino-6-(D-ribitylamino)uracil with 3,4-dihydroxy-2-butanone 4-phosphate. This is the penultimate step in the biosynthesis of riboflavin. This is 6,7-dimethyl-8-ribityllumazine synthase from Sulfurovum sp. (strain NBC37-1).